The chain runs to 311 residues: Putative pyruvate, phosphate dikinase regulatory protein (311 aa).

180 to 187 (GVSRSSKT) provides a ligand contact to ADP.

It belongs to the pyruvate, phosphate/water dikinase regulatory protein family. PDRP subfamily.

It catalyses the reaction N(tele)-phospho-L-histidyl/L-threonyl-[pyruvate, phosphate dikinase] + ADP = N(tele)-phospho-L-histidyl/O-phospho-L-threonyl-[pyruvate, phosphate dikinase] + AMP + H(+). It carries out the reaction N(tele)-phospho-L-histidyl/O-phospho-L-threonyl-[pyruvate, phosphate dikinase] + phosphate + H(+) = N(tele)-phospho-L-histidyl/L-threonyl-[pyruvate, phosphate dikinase] + diphosphate. Functionally, bifunctional serine/threonine kinase and phosphorylase involved in the regulation of the pyruvate, phosphate dikinase (PPDK) by catalyzing its phosphorylation/dephosphorylation. The polypeptide is Putative pyruvate, phosphate dikinase regulatory protein (Paramagnetospirillum magneticum (strain ATCC 700264 / AMB-1) (Magnetospirillum magneticum)).